Consider the following 307-residue polypeptide: Small ribosomal subunit protein uS2 (307 aa).

The interval 256–307 (GGEAEQAAVDATGGAATEETPAAESTGAASEAAAVSEAAEPATEQPAADAEA) is disordered. Residues 259 to 307 (AEQAAVDATGGAATEETPAAESTGAASEAAAVSEAAEPATEQPAADAEA) are compositionally biased toward low complexity.

The protein belongs to the universal ribosomal protein uS2 family.

The chain is Small ribosomal subunit protein uS2 from Nocardioides sp. (strain ATCC BAA-499 / JS614).